A 204-amino-acid polypeptide reads, in one-letter code: Lymphotoxin-alpha (204 aa).

The first 33 residues, 1-33 (MTPPGRLYLRRVCSTPILLLLGLLLALPPEAQG), serve as a signal peptide directing secretion. The region spanning 62-204 (PAAHLVGDPS…SSVFFGAFAL (143 aa)) is the THD domain. N95 carries N-linked (GlcNAc...) asparagine glycosylation. C119 and C155 are oxidised to a cystine.

The protein belongs to the tumor necrosis factor family. In terms of assembly, homotrimer, and heterotrimer of either two LTB and one LTA subunits or (less prevalent) two LTA and one LTB subunits. Interacts with TNFRSF14.

Its subcellular location is the secreted. The protein localises to the membrane. Its function is as follows. Cytokine that in its homotrimeric form binds to TNFRSF1A/TNFR1, TNFRSF1B/TNFBR and TNFRSF14/HVEM. In its heterotrimeric form with LTB binds to TNFRSF3/LTBR. Lymphotoxin is produced by lymphocytes and is cytotoxic for a wide range of tumor cells in vitro and in vivo. This Sus scrofa (Pig) protein is Lymphotoxin-alpha (LTA).